The primary structure comprises 147 residues: Effector TSP1 (147 aa).

An N-terminal signal peptide occupies residues 1–19 (MQITKTLVATLFAASTAFA). 2 disulfides stabilise this stretch: cysteine 44–cysteine 51 and cysteine 67–cysteine 87.

As to quaternary structure, homodimer.

The protein localises to the secreted. In terms of biological role, stimulates salicylic acid signaling in host plant roots. The sequence is that of Effector TSP1 from Hypocrea virens (strain Gv29-8 / FGSC 10586) (Gliocladium virens).